The following is a 1002-amino-acid chain: Lon protease homolog, mitochondrial (1002 aa).

Positions 102 to 313 constitute a Lon N-terminal domain; sequence VIALPLPHRP…LTLELVKKEM (212 aa). 468–475 provides a ligand contact to ATP; that stretch reads GPPGVGKT. One can recognise a Lon proteolytic domain in the interval 811–995; it reads QTPVGVVMGL…NEIFDIAFQS (185 aa). Residues serine 901 and lysine 944 contribute to the active site.

It belongs to the peptidase S16 family. As to quaternary structure, homohexamer or homoheptamer. Organized in a ring with a central cavity.

The protein localises to the mitochondrion matrix. The enzyme catalyses Hydrolysis of proteins in presence of ATP.. In terms of biological role, ATP-dependent serine protease that mediates the selective degradation of misfolded, unassembled or oxidatively damaged polypeptides as well as certain short-lived regulatory proteins in the mitochondrial matrix. May also have a chaperone function in the assembly of inner membrane protein complexes. Participates in the regulation of mitochondrial gene expression and in the maintenance of the integrity of the mitochondrial genome. Binds to mitochondrial DNA in a site-specific manner. The protein is Lon protease homolog, mitochondrial of Oryza sativa subsp. japonica (Rice).